Here is a 272-residue protein sequence, read N- to C-terminus: S-adenosylmethionine decarboxylase proenzyme (272 aa).

The active-site Schiff-base intermediate with substrate; via pyruvic acid is serine 122. A Pyruvic acid (Ser); by autocatalysis modification is found at serine 122. The active-site Proton acceptor; for processing activity is histidine 127. The active-site Proton donor; for catalytic activity is the cysteine 150.

The protein belongs to the prokaryotic AdoMetDC family. Type 2 subfamily. In terms of assembly, heterooctamer of four alpha and four beta chains arranged as a tetramer of alpha/beta heterodimers. Pyruvate serves as cofactor. Post-translationally, is synthesized initially as an inactive proenzyme. Formation of the active enzyme involves a self-maturation process in which the active site pyruvoyl group is generated from an internal serine residue via an autocatalytic post-translational modification. Two non-identical subunits are generated from the proenzyme in this reaction, and the pyruvate is formed at the N-terminus of the alpha chain, which is derived from the carboxyl end of the proenzyme. The post-translation cleavage follows an unusual pathway, termed non-hydrolytic serinolysis, in which the side chain hydroxyl group of the serine supplies its oxygen atom to form the C-terminus of the beta chain, while the remainder of the serine residue undergoes an oxidative deamination to produce ammonia and the pyruvoyl group blocking the N-terminus of the alpha chain.

It carries out the reaction S-adenosyl-L-methionine + H(+) = S-adenosyl 3-(methylsulfanyl)propylamine + CO2. It participates in amine and polyamine biosynthesis; S-adenosylmethioninamine biosynthesis; S-adenosylmethioninamine from S-adenosyl-L-methionine: step 1/1. Catalyzes the decarboxylation of S-adenosylmethionine to S-adenosylmethioninamine (dcAdoMet), the propylamine donor required for the synthesis of the polyamines spermine and spermidine from the diamine putrescine. This is S-adenosylmethionine decarboxylase proenzyme from Clostridium botulinum (strain Alaska E43 / Type E3).